Consider the following 1158-residue polypeptide: Serine/threonine/tyrosine-interacting-like protein 2 (1158 aa).

Disordered regions lie at residues 1–21, 280–303, 315–337, 360–392, 407–444, 492–527, 559–582, 597–622, 873–915, and 940–1135; these read MATR…DEAN, EERE…GTGS, EEED…QASK, LLSD…VERI, GYRR…ESVS, SRRY…GSEA, KDLG…KNPS, QKKV…LAKK, KVKE…CSSL, and SGLR…MDDE. Acidic residues predominate over residues 8–19; it reads EEEQVVPSEEDE. The Tyrosine-protein phosphatase domain maps to 132–280; the sequence is NEVDEVWPNV…LRELNEKLME (149 aa). Polar residues predominate over residues 322 to 337; it reads SHLSGSSLGKATQASK. A Phosphoserine modification is found at Ser-377. Position 433 is a phosphothreonine (Thr-433). A compositionally biased stretch (low complexity) spans 435 to 444; the sequence is SESSAWESVS. A compositionally biased stretch (basic and acidic residues) spans 500–517; the sequence is KREEAADRSSEAGSRVRE. At Ser-509 the chain carries Phosphoserine. Over residues 600–619 the composition is skewed to basic and acidic residues; the sequence is VGSENKEEVVELSKGEDSAL. The segment covering 877 to 890 has biased composition (acidic residues); it reads DEDDGVGDGDEDTD. Polar residues-rich tracts occupy residues 897–914 and 952–966; these read RYSS…TCSS and SDWS…TRSS. The segment covering 974 to 983 has biased composition (low complexity); sequence KSSSYKFSKS. Ser-985 is modified (phosphoserine). The segment covering 990–999 has biased composition (polar residues); that stretch reads TSSYHEANGN. Residues 1000–1012 are compositionally biased toward low complexity; that stretch reads SVRSTSRFSSSST. Residue Ser-1036 is modified to Phosphoserine. 3 stretches are compositionally biased toward basic and acidic residues: residues 1044 to 1056, 1064 to 1079, and 1094 to 1111; these read RTPE…ESPE, RSRD…KSDF, and RSEE…EEGR. The span at 1126-1135 shows a compositional bias: acidic residues; it reads REEEEEMDDE.

It belongs to the protein-tyrosine phosphatase family. Non-receptor class dual specificity subfamily.

The protein localises to the cytoplasm. It is found in the myofibril. Its subcellular location is the sarcomere. Functionally, may be required for myofiber maturation. This Homo sapiens (Human) protein is Serine/threonine/tyrosine-interacting-like protein 2.